A 1099-amino-acid chain; its full sequence is Transmembrane protein 132D (1099 aa).

A signal peptide spans 1–30; sequence MCPSEMGTLWHHWSPVLISLAALFSKVTEG. The Extracellular segment spans residues 31-915; sequence RGILESIQRF…LMQASKGLSD (885 aa). An N-linked (GlcNAc...) asparagine glycan is attached at Asn-505. The disordered stretch occupies residues 797-858; the sequence is FGQNDANPNT…LMEGRGTTTD (62 aa). Over residues 835 to 848 the composition is skewed to low complexity; the sequence is GSQEGQYYGSSSMG. Residues 916 to 936 form a helical membrane-spanning segment; it reads LEIGMYALLGVFCLAILVFLI. Topologically, residues 937–1099 are cytoplasmic; it reads NCVTFALKYR…NYMERLHENV (163 aa).

This sequence belongs to the TMEM132 family. As to quaternary structure, interacts (via C-terminus) with NCKAP. In terms of tissue distribution, expressed in mature oligodendrocytes. Detected in the brain, lung, pancreas and testis. Highly expressed in mature neurons of the adult nervous system.

Its subcellular location is the membrane. Its function is as follows. Regulate neuronals morphology via inhibition of the WAVE regulatory complex (WCR), a complex that controls F-actin cytoskeletal dynamics. The polypeptide is Transmembrane protein 132D (Homo sapiens (Human)).